Consider the following 241-residue polypeptide: GDSL esterase/lipase At5g45920 (241 aa).

Ser12 acts as the Nucleophile in catalysis. Catalysis depends on residues Asp189 and His192.

It belongs to the 'GDSL' lipolytic enzyme family.

This chain is GDSL esterase/lipase At5g45920, found in Arabidopsis thaliana (Mouse-ear cress).